Consider the following 279-residue polypeptide: MVKVVPLRFITYDPLKDPSKMIYRRPISKPVKAFKGFFSEFLGTLYLVYFCGGSVCAAFAVAGDSAARALLGGLIQGMALAALIWAVSGVSGCNLNPAVTLANLLSGRVGLIDSLYYVAAQILGCIAGAGILYGCLPNMYRIDLGVPHLAPGMNTGQAFLMEMMLTSILCLCVLGTSVFNVWDRRLNRIAPFAIGLALFIGVAIGFNFSGGALNPVRVLGPSIISGVWSHHWVYWLGPIVGAILAAFIYRCLLQERFDVIERPGYIAPLIDPSTAVSSY.

Topologically, residues 1–40 are cytoplasmic; sequence MVKVVPLRFITYDPLKDPSKMIYRRPISKPVKAFKGFFSE. The helical transmembrane segment at 41–61 threads the bilayer; that stretch reads FLGTLYLVYFCGGSVCAAFAV. The Extracellular portion of the chain corresponds to 62-69; that stretch reads AGDSAARA. The helical transmembrane segment at 70–90 threads the bilayer; sequence LLGGLIQGMALAALIWAVSGV. Residues 91-114 are Cytoplasmic-facing; the sequence is SGCNLNPAVTLANLLSGRVGLIDS. An NPA 1 motif is present at residues 96–98; it reads NPA. A helical membrane pass occupies residues 115-135; it reads LYYVAAQILGCIAGAGILYGC. The Extracellular segment spans residues 136-158; sequence LPNMYRIDLGVPHLAPGMNTGQA. A helical transmembrane segment spans residues 159–179; sequence FLMEMMLTSILCLCVLGTSVF. The Cytoplasmic portion of the chain corresponds to 180-188; it reads NVWDRRLNR. Residues 189–209 traverse the membrane as a helical segment; it reads IAPFAIGLALFIGVAIGFNFS. The Extracellular segment spans residues 210-227; sequence GGALNPVRVLGPSIISGV. The short motif at 214 to 216 is the NPA 2 element; the sequence is NPV. Residues 228-248 form a helical membrane-spanning segment; it reads WSHHWVYWLGPIVGAILAAFI. The Cytoplasmic portion of the chain corresponds to 249–279; sequence YRCLLQERFDVIERPGYIAPLIDPSTAVSSY.

Belongs to the MIP/aquaporin (TC 1.A.8) family.

It is found in the cell membrane. May form a water-specific channel. Required for prolonged spore survival on fruiting bodies. This Dictyostelium discoideum (Social amoeba) protein is Aquaporin A (aqpA).